A 154-amino-acid polypeptide reads, in one-letter code: Ribonuclease K6 (154 aa).

An N-terminal signal peptide occupies residues 1–27 (MGPHLLGRSSLLLLLLGMWWSVRPLCA). Catalysis depends on histidine 42, which acts as the Proton acceptor. 4 cysteine pairs are disulfide-bonded: cysteine 50–cysteine 108, cysteine 64–cysteine 118, cysteine 82–cysteine 133, and cysteine 89–cysteine 96. An N-linked (GlcNAc...) asparagine glycan is attached at asparagine 59. Substrate-binding positions include 65–69 (KPENT) and lysine 90. Residue asparagine 104 is glycosylated (N-linked (GlcNAc...) asparagine). The active-site Proton donor is the histidine 149.

This sequence belongs to the pancreatic ribonuclease family. As to quaternary structure, interacts (via N-terminus) with bacterial lipopolysaccharide (LPS). Kidney (at protein level).

It localises to the secreted. The protein resides in the lysosome. Its subcellular location is the cytoplasmic granule. Ribonuclease which shows a preference for the pyrimidines uridine and cytosine. Has potent antimicrobial activity against a range of Gram-positive and Gram-negative bacteria, including P.aeruginosa, A.baumanii, M.luteus, S.aureus, E.faecalis, E.faecium, S.saprophyticus and E.coli. Causes loss of bacterial membrane integrity, and also promotes agglutination of Gram-negative bacteria. Probably contributes to urinary tract sterility. Bactericidal activity is independent of RNase activity. The polypeptide is Ribonuclease K6 (RNASE6) (Bos taurus (Bovine)).